The primary structure comprises 511 residues: uncharacterized protein (511 aa).

Positions 59-79 (VPVAANDDQPDGSRQSVRGRQ) are disordered.

The protein belongs to the transposase 25 family.

This is an uncharacterized protein from Sinorhizobium fredii (strain NBRC 101917 / NGR234).